Here is a 389-residue protein sequence, read N- to C-terminus: Phosphoglycerate kinase (389 aa).

Residues aspartate 21–asparagine 23, arginine 36, histidine 59–arginine 62, arginine 112, and arginine 145 contribute to the substrate site. ATP is bound by residues lysine 196, glutamate 318, and glycine 344–serine 347.

This sequence belongs to the phosphoglycerate kinase family. Monomer.

It is found in the cytoplasm. It carries out the reaction (2R)-3-phosphoglycerate + ATP = (2R)-3-phospho-glyceroyl phosphate + ADP. It functions in the pathway carbohydrate degradation; glycolysis; pyruvate from D-glyceraldehyde 3-phosphate: step 2/5. The polypeptide is Phosphoglycerate kinase (Desulfovibrio desulfuricans (strain ATCC 27774 / DSM 6949 / MB)).